Reading from the N-terminus, the 364-residue chain is Transcription factor TGA4 (364 aa).

The segment at 39-79 (PGSIIIPTNEKPDSLSEDTSHGTEGTPHKFDQEASTSRHPD) is disordered. Residues 48-79 (EKPDSLSEDTSHGTEGTPHKFDQEASTSRHPD) are compositionally biased toward basic and acidic residues. The region spanning 78 to 141 (PDKIQRRLAQ…NGVDTNALSF (64 aa)) is the bZIP domain. 2 coiled-coil regions span residues 79 to 127 (DKIQ…RQQG) and 257 to 277 (NLRQSCQQAEDALSQGMEKLQ). Residues 80 to 100 (KIQRRLAQNREAARKSRLRKK) form a basic motif region. The tract at residues 106–120 (LETSRLKLIHLEQEL) is leucine-zipper. The region spanning 149–359 (IVAFEMEYGH…RALSSSWAAR (211 aa)) is the DOG1 domain. Cys-256 and Cys-262 are disulfide-bonded.

Belongs to the bZIP family. Binds DNA as a dimer. Interaction with the Dof domain proteins OBP1, OBP2 or OBP3 enhances the binding to the ocs element. Interacts with RAP2-3/EPB, an ethylene-responsive element binding protein. The reduced form interacts with NPR1. As to expression, predominantly expressed in roots.

The protein localises to the nucleus. Transcriptional activator that binds specifically to the DNA sequence 5'-TGACG-3'. Recognizes ocs elements like the as-1 motif of the cauliflower mosaic virus 35S promoter. Binding to the as-1-like cis elements mediate auxin- and salicylic acid-inducible transcription. May be involved in the induction of the systemic acquired resistance (SAR) via its interaction with NPR1. Could also bind to the Hex-motif (5'-TGACGTGG-3') another cis-acting element found in plant histone promoters. This is Transcription factor TGA4 (TGA4) from Arabidopsis thaliana (Mouse-ear cress).